Reading from the N-terminus, the 505-residue chain is Glutamate--tRNA ligase (505 aa).

Positions 12–22 (PSPTGALHIGG) match the 'HIGH' region motif. The 'KMSKS' region motif lies at 260–264 (KLSKR). Residue K263 coordinates ATP.

Belongs to the class-I aminoacyl-tRNA synthetase family. Glutamate--tRNA ligase type 1 subfamily. Monomer.

The protein resides in the cytoplasm. It catalyses the reaction tRNA(Glu) + L-glutamate + ATP = L-glutamyl-tRNA(Glu) + AMP + diphosphate. Its function is as follows. Catalyzes the attachment of glutamate to tRNA(Glu) in a two-step reaction: glutamate is first activated by ATP to form Glu-AMP and then transferred to the acceptor end of tRNA(Glu). The chain is Glutamate--tRNA ligase from Parabacteroides distasonis (strain ATCC 8503 / DSM 20701 / CIP 104284 / JCM 5825 / NCTC 11152).